The sequence spans 87 residues: Small ribosomal subunit protein bS20 (87 aa).

The span at 1 to 12 shows a compositional bias: basic residues; sequence MANHKSALKRNR. A disordered region spans residues 1-21; that stretch reads MANHKSALKRNRQAAVRNARN.

The protein belongs to the bacterial ribosomal protein bS20 family.

Functionally, binds directly to 16S ribosomal RNA. In Syntrophotalea carbinolica (strain DSM 2380 / NBRC 103641 / GraBd1) (Pelobacter carbinolicus), this protein is Small ribosomal subunit protein bS20.